Reading from the N-terminus, the 218-residue chain is Eukaryotic translation initiation factor 3 subunit K (218 aa).

One can recognise a PCI domain in the interval 44-205; sequence YDWGANLAVL…NIKTKNITEK (162 aa).

This sequence belongs to the eIF-3 subunit K family. As to quaternary structure, component of the eukaryotic translation initiation factor 3 (eIF-3) complex.

The protein localises to the cytoplasm. Component of the eukaryotic translation initiation factor 3 (eIF-3) complex, which is involved in protein synthesis of a specialized repertoire of mRNAs and, together with other initiation factors, stimulates binding of mRNA and methionyl-tRNAi to the 40S ribosome. The eIF-3 complex specifically targets and initiates translation of a subset of mRNAs involved in cell proliferation. This is Eukaryotic translation initiation factor 3 subunit K from Bombyx mori (Silk moth).